The following is a 130-amino-acid chain: Large ribosomal subunit protein bL20 (130 aa).

This sequence belongs to the bacterial ribosomal protein bL20 family.

Binds directly to 23S ribosomal RNA and is necessary for the in vitro assembly process of the 50S ribosomal subunit. It is not involved in the protein synthesizing functions of that subunit. The sequence is that of Large ribosomal subunit protein bL20 from Leifsonia xyli subsp. xyli (strain CTCB07).